Here is a 132-residue protein sequence, read N- to C-terminus: Small ribosomal subunit protein uS8 (132 aa).

Belongs to the universal ribosomal protein uS8 family. Part of the 30S ribosomal subunit. Contacts proteins S5 and S12.

One of the primary rRNA binding proteins, it binds directly to 16S rRNA central domain where it helps coordinate assembly of the platform of the 30S subunit. The sequence is that of Small ribosomal subunit protein uS8 from Lactobacillus helveticus (strain DPC 4571).